Here is a 463-residue protein sequence, read N- to C-terminus: Glutamate--tRNA ligase 2 (463 aa).

The short motif at 10 to 20 is the 'HIGH' region element; that stretch reads PSPTGFLHIGS. The 'KMSKS' region signature appears at 239–243; it reads KLSKR. K242 is an ATP binding site.

This sequence belongs to the class-I aminoacyl-tRNA synthetase family. Glutamate--tRNA ligase type 1 subfamily. As to quaternary structure, monomer.

The protein localises to the cytoplasm. The enzyme catalyses tRNA(Glu) + L-glutamate + ATP = L-glutamyl-tRNA(Glu) + AMP + diphosphate. Functionally, catalyzes the attachment of glutamate to tRNA(Glu) in a two-step reaction: glutamate is first activated by ATP to form Glu-AMP and then transferred to the acceptor end of tRNA(Glu). The protein is Glutamate--tRNA ligase 2 of Rickettsia felis (strain ATCC VR-1525 / URRWXCal2) (Rickettsia azadi).